The sequence spans 544 residues: Terpene synthase 9 (544 aa).

Mg(2+) is bound by residues aspartate 296, aspartate 300, and glutamate 449. The DDXXD motif signature appears at 296-300; sequence DDTFD.

This sequence belongs to the terpene synthase family. Tpsa subfamily. Mg(2+) is required as a cofactor. Requires Mn(2+) as cofactor.

The catalysed reaction is (2E,6E)-farnesyl diphosphate = (1E,4E)-germacrene B + diphosphate. It catalyses the reaction (2E)-geranyl diphosphate = terpinolene + diphosphate. It carries out the reaction (2E)-geranyl diphosphate = limonene + diphosphate. The enzyme catalyses (2E)-geranyl diphosphate = beta-myrcene + diphosphate. The catalysed reaction is (2Z,6Z)-farnesyl diphosphate = germacrene A + diphosphate. It catalyses the reaction (2Z,6Z)-farnesyl diphosphate = alpha-humulene + diphosphate. It participates in secondary metabolite biosynthesis; terpenoid biosynthesis. Sesquiterpene synthase involved in the biosynthesis of volatile compounds. Mediates the conversion of (2E,6E)-farnesyl diphosphate (FPP) into (1E,4E)-germacrene B, but also smaller amounts of germacrene A and C, and of (2Z,6Z)-farnesyl diphosphate ((ZZ)-FPP) into alpha-humulene, germacrene A and germacrene B. Can act with a low efficiency as a monoterpene synthase with geranyl diphosphate (GPP) as substrate, thus producing beta-myrcene, limonene and terpinolene. This is Terpene synthase 9 from Solanum habrochaites (Wild tomato).